A 246-amino-acid chain; its full sequence is Chalcone--flavanone isomerase 1 (246 aa).

Positions 59, 124, and 201 each coordinate substrate.

Belongs to the chalcone isomerase family. Mostly expressed in siliques and flowers, and, to a lower extent, in leaves.

The catalysed reaction is a chalcone = a flavanone.. It functions in the pathway secondary metabolite biosynthesis; flavonoid biosynthesis. Its function is as follows. Catalyzes the intramolecular cyclization of bicyclic chalcones into tricyclic (S)-flavanones. Responsible for the isomerization of 4,2',4',6'-tetrahydroxychalcone (also termed chalcone) into naringenin. This chain is Chalcone--flavanone isomerase 1 (CHI1), found in Arabidopsis thaliana (Mouse-ear cress).